The chain runs to 283 residues: DegV domain-containing protein BH3627 (283 aa).

The DegV domain occupies 4 to 281 (IAIVTDSTAY…EGSIGLSWYI (278 aa)). The hexadecanoate site is built by T62 and S95.

May bind long-chain fatty acids, such as palmitate, and may play a role in lipid transport or fatty acid metabolism. The chain is DegV domain-containing protein BH3627 from Halalkalibacterium halodurans (strain ATCC BAA-125 / DSM 18197 / FERM 7344 / JCM 9153 / C-125) (Bacillus halodurans).